The primary structure comprises 245 residues: 4-hydroxy-tetrahydrodipicolinate reductase (245 aa).

Residues 7–12 (GAKGKV), 75–77 (GTT), and 102–105 (APNF) contribute to the NAD(+) site. His132 (proton donor/acceptor) is an active-site residue. His133 contributes to the (S)-2,3,4,5-tetrahydrodipicolinate binding site. Lys136 acts as the Proton donor in catalysis. (S)-2,3,4,5-tetrahydrodipicolinate is bound at residue 142–143 (GT).

This sequence belongs to the DapB family.

It is found in the cytoplasm. The catalysed reaction is (S)-2,3,4,5-tetrahydrodipicolinate + NAD(+) + H2O = (2S,4S)-4-hydroxy-2,3,4,5-tetrahydrodipicolinate + NADH + H(+). It carries out the reaction (S)-2,3,4,5-tetrahydrodipicolinate + NADP(+) + H2O = (2S,4S)-4-hydroxy-2,3,4,5-tetrahydrodipicolinate + NADPH + H(+). Its pathway is amino-acid biosynthesis; L-lysine biosynthesis via DAP pathway; (S)-tetrahydrodipicolinate from L-aspartate: step 4/4. In terms of biological role, catalyzes the conversion of 4-hydroxy-tetrahydrodipicolinate (HTPA) to tetrahydrodipicolinate. The protein is 4-hydroxy-tetrahydrodipicolinate reductase of Mycobacterium bovis (strain BCG / Pasteur 1173P2).